Consider the following 311-residue polypeptide: Ribosomal protein L11 methyltransferase (311 aa).

S-adenosyl-L-methionine contacts are provided by threonine 162, glycine 183, aspartate 205, and asparagine 248.

The protein belongs to the methyltransferase superfamily. PrmA family.

Its subcellular location is the cytoplasm. The catalysed reaction is L-lysyl-[protein] + 3 S-adenosyl-L-methionine = N(6),N(6),N(6)-trimethyl-L-lysyl-[protein] + 3 S-adenosyl-L-homocysteine + 3 H(+). Methylates ribosomal protein L11. In Bacillus velezensis (strain DSM 23117 / BGSC 10A6 / LMG 26770 / FZB42) (Bacillus amyloliquefaciens subsp. plantarum), this protein is Ribosomal protein L11 methyltransferase.